The following is a 603-amino-acid chain: Phosphoenolpyruvate carboxykinase [GTP] (603 aa).

Substrate-binding positions include Arg87 and 209 to 211; that span reads YAG. 2 residues coordinate Mn(2+): Lys218 and His237. Position 258 (Ser258) interacts with substrate. 259–264 lines the GTP pocket; that stretch reads GSGKTS. Residue Ser260 is part of the active site. Residue Asp275 coordinates Mn(2+). 365–367 is a substrate binding site; the sequence is NAR. GTP contacts are provided by Arg367 and Arg398.

It belongs to the phosphoenolpyruvate carboxykinase [GTP] family. Requires Mn(2+) as cofactor.

The protein localises to the cytoplasm. It carries out the reaction oxaloacetate + GTP = phosphoenolpyruvate + GDP + CO2. The protein operates within carbohydrate biosynthesis; gluconeogenesis. Its function is as follows. Catalyzes the conversion of oxaloacetate (OAA) to phosphoenolpyruvate (PEP), the rate-limiting step in the metabolic pathway that produces glucose from lactate and other precursors derived from the citric acid cycle. In Saccharolobus solfataricus (strain ATCC 35092 / DSM 1617 / JCM 11322 / P2) (Sulfolobus solfataricus), this protein is Phosphoenolpyruvate carboxykinase [GTP].